We begin with the raw amino-acid sequence, 65 residues long: UPF0434 protein CC_0108 (65 aa).

It belongs to the UPF0434 family.

This is UPF0434 protein CC_0108 from Caulobacter vibrioides (strain ATCC 19089 / CIP 103742 / CB 15) (Caulobacter crescentus).